We begin with the raw amino-acid sequence, 205 residues long: Small ribosomal subunit protein uS4 (205 aa).

The interval 1-49 is disordered; the sequence is MSKRQSAKYKLDRRMGENIWGRPKSPVNRREYGPGQHGQRRKGKLSDFG. One can recognise an S4 RNA-binding domain in the interval 94–157; that stretch reads SRLDAIVFRA…KQLTVVLESV (64 aa).

The protein belongs to the universal ribosomal protein uS4 family. As to quaternary structure, part of the 30S ribosomal subunit. Contacts protein S5. The interaction surface between S4 and S5 is involved in control of translational fidelity.

One of the primary rRNA binding proteins, it binds directly to 16S rRNA where it nucleates assembly of the body of the 30S subunit. Its function is as follows. With S5 and S12 plays an important role in translational accuracy. In Chelativorans sp. (strain BNC1), this protein is Small ribosomal subunit protein uS4.